The following is a 482-amino-acid chain: tRNA sulfurtransferase (482 aa).

In terms of domain architecture, THUMP spans 61-165 (LAIRDALTRI…DDRLLLIKGR (105 aa)). ATP contacts are provided by residues 183 to 184 (LI), lysine 265, glycine 287, and glutamine 296. Cysteine 344 and cysteine 456 form a disulfide bridge. A Rhodanese domain is found at 404 to 482 (FGPNDVILDI…GFNNVKVYRP (79 aa)). Cysteine 456 functions as the Cysteine persulfide intermediate in the catalytic mechanism.

Belongs to the ThiI family.

It localises to the cytoplasm. The enzyme catalyses [ThiI sulfur-carrier protein]-S-sulfanyl-L-cysteine + a uridine in tRNA + 2 reduced [2Fe-2S]-[ferredoxin] + ATP + H(+) = [ThiI sulfur-carrier protein]-L-cysteine + a 4-thiouridine in tRNA + 2 oxidized [2Fe-2S]-[ferredoxin] + AMP + diphosphate. It carries out the reaction [ThiS sulfur-carrier protein]-C-terminal Gly-Gly-AMP + S-sulfanyl-L-cysteinyl-[cysteine desulfurase] + AH2 = [ThiS sulfur-carrier protein]-C-terminal-Gly-aminoethanethioate + L-cysteinyl-[cysteine desulfurase] + A + AMP + 2 H(+). Its pathway is cofactor biosynthesis; thiamine diphosphate biosynthesis. In terms of biological role, catalyzes the ATP-dependent transfer of a sulfur to tRNA to produce 4-thiouridine in position 8 of tRNAs, which functions as a near-UV photosensor. Also catalyzes the transfer of sulfur to the sulfur carrier protein ThiS, forming ThiS-thiocarboxylate. This is a step in the synthesis of thiazole, in the thiamine biosynthesis pathway. The sulfur is donated as persulfide by IscS. The sequence is that of tRNA sulfurtransferase from Escherichia coli (strain 55989 / EAEC).